The primary structure comprises 200 residues: DNA dC-&gt;dU-editing enzyme APOBEC-3H (200 aa).

A CMP/dCMP-type deaminase domain is found at Leu-4–Leu-126. A Zn(2+)-binding site is contributed by His-54. Glu-56 acts as the Proton donor in catalysis. Zn(2+) is bound by residues Cys-85 and Cys-88. Residues Tyr-160–Ile-182 are a coiled coil.

Belongs to the cytidine and deoxycytidylate deaminase family. In terms of assembly, homodimer. Interacts with AGO1, AGO2 and AGO3. The cofactor is Zn(2+). (Microbial infection) Following infection by some HIV-1 strains, such as isolate BRU/LAI, can be ubiquitinated by a cullin-5-RING E3 ubiquitin-protein ligase complex (ECS complex) hijacked by the HIV-1 Vif protein, leading to its degradation. Ubiquitination by the ECS complex is however less efficent compared to APOBEC3G or APOBEC3G. Expressed in lymphoid organs. Also detected in non-lymphoid tissues including lung, testis, ovary, fetal liver and skin.

Its subcellular location is the cytoplasm. The protein resides in the nucleus. It localises to the P-body. It carries out the reaction a 2'-deoxycytidine in single-stranded DNA + H2O + H(+) = a 2'-deoxyuridine in single-stranded DNA + NH4(+). With respect to regulation, APOBEC3H activity is regulated by RNA. While RNA-binding inhibits the DNA deaminase activity, double-stranded RNA is required for HIV-1 restriction by promoting APOBEC3H homodimerization and packaging into retroviral nucleocapsids. Its activity is regulated as follows. (Microbial infection) Antiviral activity is inhibited to some extent by the HIV-1 virion infectivity factor (VIF), that prevents its incorporation into progeny virions by both inhibiting its translation and/or by inducing its ubiquitination and subsequent degradation by the 26S proteasome. DNA deaminase (cytidine deaminase) which acts as an inhibitor of retrovirus replication and retrotransposon mobility via deaminase-dependent and -independent mechanisms. The A3H-var/haplotype 2 exhibits antiviral activity against vif-deficient HIV-1. After the penetration of retroviral nucleocapsids into target cells of infection and the initiation of reverse transcription, it can induce the conversion of cytosine to uracil in the minus-sense single-strand viral DNA, leading to G-to-A hypermutations in the subsequent plus-strand viral DNA. The resultant detrimental levels of mutations in the proviral genome, along with a deamination-independent mechanism that works prior to the proviral integration, together exert efficient antiretroviral effects in infected target cells. Selectively targets single-stranded DNA and does not deaminate double-stranded DNA or single- or double-stranded RNA. Exhibits antiviral activity also against T-cell leukemia virus type 1 (HTLV-1) and may inhibit the mobility of LTR and non-LTR retrotransposons. This Homo sapiens (Human) protein is DNA dC-&gt;dU-editing enzyme APOBEC-3H.